Reading from the N-terminus, the 221-residue chain is Probable septum site-determining protein MinC (221 aa).

It belongs to the MinC family. In terms of assembly, interacts with MinD and FtsZ.

Cell division inhibitor that blocks the formation of polar Z ring septums. Rapidly oscillates between the poles of the cell to destabilize FtsZ filaments that have formed before they mature into polar Z rings. Prevents FtsZ polymerization. The chain is Probable septum site-determining protein MinC from Shewanella sp. (strain MR-7).